The sequence spans 423 residues: Probable sucrose-phosphate synthase (423 aa).

Belongs to the glycosyltransferase 1 family.

It carries out the reaction beta-D-fructose 6-phosphate + UDP-alpha-D-glucose = sucrose 6(F)-phosphate + UDP + H(+). In terms of biological role, plays a role in sucrose synthesis by catalyzing the first step of sucrose biosynthesis from UDP-glucose and fructose-6-phosphate. This chain is Probable sucrose-phosphate synthase, found in Thermosipho melanesiensis (strain DSM 12029 / CIP 104789 / BI429).